We begin with the raw amino-acid sequence, 396 residues long: ATP phosphoribosyltransferase regulatory subunit (396 aa).

Belongs to the class-II aminoacyl-tRNA synthetase family. HisZ subfamily. As to quaternary structure, heteromultimer composed of HisG and HisZ subunits.

The protein localises to the cytoplasm. The protein operates within amino-acid biosynthesis; L-histidine biosynthesis; L-histidine from 5-phospho-alpha-D-ribose 1-diphosphate: step 1/9. Required for the first step of histidine biosynthesis. May allow the feedback regulation of ATP phosphoribosyltransferase activity by histidine. This is ATP phosphoribosyltransferase regulatory subunit from Cellvibrio japonicus (strain Ueda107) (Pseudomonas fluorescens subsp. cellulosa).